A 279-amino-acid polypeptide reads, in one-letter code: NADPH-dependent 7-cyano-7-deazaguanine reductase (279 aa).

86-88 (IES) contacts substrate. 88–89 (SK) provides a ligand contact to NADPH. Cys-187 functions as the Thioimide intermediate in the catalytic mechanism. Asp-194 (proton donor) is an active-site residue. 226–227 (HE) provides a ligand contact to substrate. 255–256 (RG) serves as a coordination point for NADPH.

This sequence belongs to the GTP cyclohydrolase I family. QueF type 2 subfamily. In terms of assembly, homodimer.

The protein localises to the cytoplasm. It catalyses the reaction 7-aminomethyl-7-carbaguanine + 2 NADP(+) = 7-cyano-7-deazaguanine + 2 NADPH + 3 H(+). It functions in the pathway tRNA modification; tRNA-queuosine biosynthesis. Functionally, catalyzes the NADPH-dependent reduction of 7-cyano-7-deazaguanine (preQ0) to 7-aminomethyl-7-deazaguanine (preQ1). The sequence is that of NADPH-dependent 7-cyano-7-deazaguanine reductase from Haemophilus influenzae (strain ATCC 51907 / DSM 11121 / KW20 / Rd).